Reading from the N-terminus, the 429-residue chain is Adenylosuccinate synthetase (429 aa).

GTP contacts are provided by residues 12–18 (GDEGKGK) and 40–42 (GHT). Aspartate 13 acts as the Proton acceptor in catalysis. Residues aspartate 13 and glycine 40 each contribute to the Mg(2+) site. IMP contacts are provided by residues 13-16 (DEGK), 38-41 (NAGH), threonine 129, arginine 143, glutamine 223, threonine 238, and arginine 302. Histidine 41 acts as the Proton donor in catalysis. 298–304 (VVTGRKR) serves as a coordination point for substrate. Residues arginine 304, 330–332 (KLD), and 412–414 (STS) contribute to the GTP site.

It belongs to the adenylosuccinate synthetase family. In terms of assembly, homodimer. It depends on Mg(2+) as a cofactor.

Its subcellular location is the cytoplasm. It carries out the reaction IMP + L-aspartate + GTP = N(6)-(1,2-dicarboxyethyl)-AMP + GDP + phosphate + 2 H(+). The protein operates within purine metabolism; AMP biosynthesis via de novo pathway; AMP from IMP: step 1/2. In terms of biological role, plays an important role in the de novo pathway of purine nucleotide biosynthesis. Catalyzes the first committed step in the biosynthesis of AMP from IMP. The chain is Adenylosuccinate synthetase from Maricaulis maris (strain MCS10) (Caulobacter maris).